We begin with the raw amino-acid sequence, 648 residues long: Macrolide export ATP-binding/permease protein MacB (648 aa).

Residues 5 to 243 (LELKDIRRSY…AGGTEPVVNT (239 aa)) enclose the ABC transporter domain. 41–48 (GASGSGKS) provides a ligand contact to ATP. A run of 4 helical transmembrane segments spans residues 273–293 (LLTMLGIIIGIASVVSIVVVG), 523–543 (LFMTLVAVISLVVGGIGVMNI), 576–596 (AVLVCLVGGALGITLSLLIAF), and 611–631 (PLALLLAFLCSTVTGILFGWL).

Belongs to the ABC transporter superfamily. Macrolide exporter (TC 3.A.1.122) family. In terms of assembly, homodimer. Part of the tripartite efflux system MacAB-TolC, which is composed of an inner membrane transporter, MacB, a periplasmic membrane fusion protein, MacA, and an outer membrane component, TolC. The complex forms a large protein conduit and can translocate molecules across both the inner and outer membranes. Interacts with MacA.

Its subcellular location is the cell inner membrane. Part of the tripartite efflux system MacAB-TolC. MacB is a non-canonical ABC transporter that contains transmembrane domains (TMD), which form a pore in the inner membrane, and an ATP-binding domain (NBD), which is responsible for energy generation. Confers resistance against macrolides. This Escherichia coli O157:H7 protein is Macrolide export ATP-binding/permease protein MacB.